The primary structure comprises 347 residues: Eukaryotic translation initiation factor 3 subunit I (347 aa).

WD repeat units lie at residues 8-47, 50-89, 149-190, 194-233, and 291-330; these read GHER…RLGT, GHTG…CVAT, THEG…EYVD, LHEK…VLKK, and GHFG…FDFK. Position 302 is a phosphoserine (serine 302).

This sequence belongs to the eIF-3 subunit I family. In terms of assembly, component of the eukaryotic translation initiation factor 3 (eIF-3) complex.

It is found in the cytoplasm. Functionally, component of the eukaryotic translation initiation factor 3 (eIF-3) complex, which is involved in protein synthesis of a specialized repertoire of mRNAs and, together with other initiation factors, stimulates binding of mRNA and methionyl-tRNAi to the 40S ribosome. The eIF-3 complex specifically targets and initiates translation of a subset of mRNAs involved in cell proliferation. The polypeptide is Eukaryotic translation initiation factor 3 subunit I (Saccharomyces cerevisiae (strain YJM789) (Baker's yeast)).